A 344-amino-acid polypeptide reads, in one-letter code: Heat-inducible transcription repressor HrcA (344 aa).

Belongs to the HrcA family.

Its function is as follows. Negative regulator of class I heat shock genes (grpE-dnaK-dnaJ and groELS operons). Prevents heat-shock induction of these operons. This chain is Heat-inducible transcription repressor HrcA, found in Streptococcus uberis (strain ATCC BAA-854 / 0140J).